Reading from the N-terminus, the 499-residue chain is Lysine--tRNA ligase (499 aa).

Mg(2+)-binding residues include glutamate 408 and glutamate 415.

This sequence belongs to the class-II aminoacyl-tRNA synthetase family. As to quaternary structure, homodimer. The cofactor is Mg(2+).

The protein localises to the cytoplasm. It catalyses the reaction tRNA(Lys) + L-lysine + ATP = L-lysyl-tRNA(Lys) + AMP + diphosphate. The sequence is that of Lysine--tRNA ligase from Thermoanaerobacter pseudethanolicus (strain ATCC 33223 / 39E) (Clostridium thermohydrosulfuricum).